A 1148-amino-acid polypeptide reads, in one-letter code: Putative ATP-dependent RNA helicase rha-2 (1148 aa).

Over residues 1–10 (MGKRKTKEDN) the composition is skewed to basic and acidic residues. Disordered stretches follow at residues 1 to 51 (MGKR…FAKE) and 101 to 163 (STKL…DAGN). Residues 138 to 160 (PTDDESSSEEEEEEEEGDNDIED) show a composition bias toward acidic residues. Positions 246–412 (VEAINENLVT…KLFPLLTPKV (167 aa)) constitute a Helicase ATP-binding domain. Position 259-266 (259-266 (GETGSGKT)) interacts with ATP. The short motif at 355–358 (DEAH) is the DEAH box element. Positions 463 to 703 (EVKQLITKLK…QLVLHLKSMN (241 aa)) constitute a Helicase C-terminal domain.

Belongs to the DEAD box helicase family. DEAH subfamily.

The enzyme catalyses ATP + H2O = ADP + phosphate + H(+). Probable ATP-binding RNA helicase. The protein is Putative ATP-dependent RNA helicase rha-2 (rha-2) of Caenorhabditis elegans.